A 1447-amino-acid chain; its full sequence is Calcium-dependent secretion activator (1447 aa).

Residues 1–15 (MIDPSSSEEEGEDDA) show a composition bias toward acidic residues. Disordered stretches follow at residues 1 to 35 (MIDP…TSAV) and 101 to 163 (DTGN…EEEE). Composition is skewed to polar residues over residues 18–32 (NVSS…TKGT) and 111–126 (GIPS…QSVG). Residues 127 to 144 (SSRANSLPRPLSPSPSLT) show a composition bias toward low complexity. Positions 145–163 (SEKHETAEPHGKHEREEEE) are enriched in basic and acidic residues. The 131-residue stretch at 417–547 (SKYGLQKLKR…PLSSKSPEWH (131 aa)) folds into the C2 domain. In terms of domain architecture, PH spans 573-683 (NMKHCGYLYA…WVMAMYRATG (111 aa)). One can recognise an MHD1 domain in the interval 970-1157 (VDMDRVLSEQ…DMIEQCIQRT (188 aa)). Over residues 1386 to 1395 (REGEEEDNGD) the composition is skewed to acidic residues. The segment at 1386-1406 (REGEEEDNGDESTSNIPRGLP) is disordered.

In terms of tissue distribution, restricted to the nervous system at all stages of development and highly localized at synapses (at protein level).

The protein localises to the cytoplasmic vesicle membrane. It localises to the synapse. Calcium-binding protein involved in exocytosis of vesicles filled with neurotransmitters and neuropeptides. May specifically mediate the Ca(2+)-dependent exocytosis of large dense-core vesicles (DCVs) and other dense-core vesicles. However, it probably also participates in small clear synaptic vesicles (SVs) exocytosis and it is unclear whether its function is related to Ca(2+) triggering. This is Calcium-dependent secretion activator from Drosophila melanogaster (Fruit fly).